Reading from the N-terminus, the 95-residue chain is MTKSELIEKLATRQSQMSAKEVESAIKEMLEQMAQTLEGGDRIEIRGFGSFSLHFRAPRTGRNPKTGTSVDLDGKYVPHFKPGKELRERVDAINA.

The interval 56–76 (RAPRTGRNPKTGTSVDLDGKY) is disordered.

It belongs to the bacterial histone-like protein family. Heterodimer of an alpha and a beta chain.

This protein is one of the two subunits of integration host factor, a specific DNA-binding protein that functions in genetic recombination as well as in transcriptional and translational control. The protein is Integration host factor subunit beta of Shewanella sediminis (strain HAW-EB3).